The chain runs to 379 residues: Salicylate/benzoate carboxyl methyltransferase (379 aa).

Y40 is a binding site for S-adenosyl-L-homocysteine. Salicylate is bound at residue Q47. 6 residues coordinate S-adenosyl-L-homocysteine: C82, N87, D119, L120, S155, and F156. Residues H176 and W177 each contribute to the salicylate site. N188, D275, F277, and N278 together coordinate Mg(2+).

This sequence belongs to the methyltransferase superfamily. Type-7 methyltransferase family. SABATH subfamily. As to quaternary structure, homodimer. Mg(2+) serves as cofactor. As to expression, expressed in flowers and at lower levels in leaves and stems. Hardly detected in roots and siliques. Expressed in the sepals and the leaf trichomes and hydathodes.

The enzyme catalyses benzoate + S-adenosyl-L-methionine = methyl benzoate + S-adenosyl-L-homocysteine. It catalyses the reaction salicylate + S-adenosyl-L-methionine = methyl salicylate + S-adenosyl-L-homocysteine. Its function is as follows. Methyltransferase involved in the biosynthesis of methylsalicylate in response to stresses. Utilizes salicylic acid (SA) more efficiently than benzoic acid (BA). Can also use anthranilic acid and m-hydroxybenzoic acid as substrate. This chain is Salicylate/benzoate carboxyl methyltransferase (BSMT1), found in Arabidopsis thaliana (Mouse-ear cress).